We begin with the raw amino-acid sequence, 357 residues long: NADH-quinone oxidoreductase subunit H (357 aa).

8 helical membrane passes run 20–40, 92–112, 127–147, 165–185, 206–226, 268–288, 294–314, and 329–349; these read WLVV…ILCV, ILFI…WAVV, LLYV…AGWA, VSYE…SGSL, FLSW…ISAV, ILLS…PIDI, IPGW…FIWF, and LGWK…AIWM.

Belongs to the complex I subunit 1 family. In terms of assembly, NDH-1 is composed of 14 different subunits. Subunits NuoA, H, J, K, L, M, N constitute the membrane sector of the complex.

It localises to the cell inner membrane. It carries out the reaction a quinone + NADH + 5 H(+)(in) = a quinol + NAD(+) + 4 H(+)(out). NDH-1 shuttles electrons from NADH, via FMN and iron-sulfur (Fe-S) centers, to quinones in the respiratory chain. The immediate electron acceptor for the enzyme in this species is believed to be ubiquinone. Couples the redox reaction to proton translocation (for every two electrons transferred, four hydrogen ions are translocated across the cytoplasmic membrane), and thus conserves the redox energy in a proton gradient. This subunit may bind ubiquinone. The sequence is that of NADH-quinone oxidoreductase subunit H from Bordetella avium (strain 197N).